Consider the following 235-residue polypeptide: Peptidyl-tRNA hydrolase (235 aa).

Y14 is a tRNA binding site. The active-site Proton acceptor is the H19. Positions 64, 66, and 112 each coordinate tRNA. The disordered stretch occupies residues 188–235 (APARNSGTRPDNPGKGSPEKPAAKPANDPIAEPPSLSDRLRALTERFR). Basic and acidic residues predominate over residues 225–235 (DRLRALTERFR).

Belongs to the PTH family. As to quaternary structure, monomer.

The protein resides in the cytoplasm. The enzyme catalyses an N-acyl-L-alpha-aminoacyl-tRNA + H2O = an N-acyl-L-amino acid + a tRNA + H(+). Functionally, hydrolyzes ribosome-free peptidyl-tRNAs (with 1 or more amino acids incorporated), which drop off the ribosome during protein synthesis, or as a result of ribosome stalling. In terms of biological role, catalyzes the release of premature peptidyl moieties from peptidyl-tRNA molecules trapped in stalled 50S ribosomal subunits, and thus maintains levels of free tRNAs and 50S ribosomes. This is Peptidyl-tRNA hydrolase from Paracoccus denitrificans (strain Pd 1222).